The chain runs to 140 residues: Hemoglobin subunit beta (140 aa).

A Globin domain is found at G1–H140. Residues H57 and H86 each coordinate heme b.

This sequence belongs to the globin family. In terms of assembly, heterotetramer of either two alpha-B chains or two alpha-C chains and two beta chains.

Its function is as follows. The beta chain is a component of adult hemoglobins B. And C. This is Hemoglobin subunit beta (HBB) from Aquarana catesbeiana (American bullfrog).